Consider the following 411-residue polypeptide: Secretion apparatus protein BsaZ (411 aa).

Helical transmembrane passes span 28–48 (IVAL…VDLT), 80–100 (IAAP…LVQS), 137–157 (ALLY…LYHA), and 175–195 (IVLT…VLIL). The disordered stretch occupies residues 341–411 (AANRGGPPPE…APARTGDQNA (71 aa)). Residues 370 to 404 (DACADNAFPDDAPPGAAAPNAGSPDGPAPDGGAPA) show a composition bias toward low complexity.

The protein belongs to the type III secretion exporter family.

It localises to the cell membrane. In terms of biological role, part of the bsa type III secretion system, is involved in the intracellular replication of invading bacteria inside the host cell. Probably necessary for the lysis of the vacuole membrane and escape into the host cell cytoplasm. The chain is Secretion apparatus protein BsaZ (bsaZ) from Burkholderia pseudomallei (strain 1026b).